We begin with the raw amino-acid sequence, 216 residues long: MRVAIIDYGSGNLRSATKAFERAAREAGIDATIDLTDKPDHVASADRIVLPGVGAYADCSAGLNAMPGMHEALIEAVEKKAHPFLGICVGMQLMSSRGLEKTVSTGLGWIEGDVVEMTPSDPTLKIPQIGWNTLEIRHAHPLFDGIKTGADGLHAYFVHSYHLAAKHSTDVIATTNYGGAMTAFVGRDNMAGAQFHPEKSQTLGLALISNFLRWKP.

One can recognise a Glutamine amidotransferase type-1 domain in the interval 2–216; the sequence is RVAIIDYGSG…LISNFLRWKP (215 aa). Cysteine 88 serves as the catalytic Nucleophile. Active-site residues include histidine 196 and glutamate 198.

In terms of assembly, heterodimer of HisH and HisF.

The protein localises to the cytoplasm. It carries out the reaction 5-[(5-phospho-1-deoxy-D-ribulos-1-ylimino)methylamino]-1-(5-phospho-beta-D-ribosyl)imidazole-4-carboxamide + L-glutamine = D-erythro-1-(imidazol-4-yl)glycerol 3-phosphate + 5-amino-1-(5-phospho-beta-D-ribosyl)imidazole-4-carboxamide + L-glutamate + H(+). The catalysed reaction is L-glutamine + H2O = L-glutamate + NH4(+). Its pathway is amino-acid biosynthesis; L-histidine biosynthesis; L-histidine from 5-phospho-alpha-D-ribose 1-diphosphate: step 5/9. In terms of biological role, IGPS catalyzes the conversion of PRFAR and glutamine to IGP, AICAR and glutamate. The HisH subunit catalyzes the hydrolysis of glutamine to glutamate and ammonia as part of the synthesis of IGP and AICAR. The resulting ammonia molecule is channeled to the active site of HisF. This chain is Imidazole glycerol phosphate synthase subunit HisH, found in Agrobacterium fabrum (strain C58 / ATCC 33970) (Agrobacterium tumefaciens (strain C58)).